A 293-amino-acid polypeptide reads, in one-letter code: NAD kinase (293 aa).

D74 acts as the Proton acceptor in catalysis. Residues 74-75 (DG), 148-149 (NE), H159, R176, D178, T186, 189-194 (TAYSLS), and Q248 contribute to the NAD(+) site.

It belongs to the NAD kinase family. In terms of assembly, homodimer. Requires a divalent metal cation as cofactor.

It localises to the cytoplasm. It catalyses the reaction NAD(+) + ATP = ADP + NADP(+) + H(+). In terms of biological role, involved in the regulation of the intracellular balance of NAD and NADP, and is a key enzyme in the biosynthesis of NADP. Catalyzes specifically the phosphorylation on 2'-hydroxyl of the adenosine moiety of NAD to yield NADP. The polypeptide is NAD kinase (Yersinia pestis).